Reading from the N-terminus, the 422-residue chain is Enolase (422 aa).

Residue glutamine 162 coordinates (2R)-2-phosphoglycerate. Residue glutamate 204 is the Proton donor of the active site. Residues aspartate 241, glutamate 285, and aspartate 312 each coordinate Mg(2+). (2R)-2-phosphoglycerate-binding residues include lysine 337, arginine 366, serine 367, and lysine 388. Lysine 337 (proton acceptor) is an active-site residue.

It belongs to the enolase family. Mg(2+) is required as a cofactor.

The protein resides in the cytoplasm. The protein localises to the secreted. It is found in the cell surface. The enzyme catalyses (2R)-2-phosphoglycerate = phosphoenolpyruvate + H2O. Its pathway is carbohydrate degradation; glycolysis; pyruvate from D-glyceraldehyde 3-phosphate: step 4/5. Functionally, catalyzes the reversible conversion of 2-phosphoglycerate (2-PG) into phosphoenolpyruvate (PEP). It is essential for the degradation of carbohydrates via glycolysis. This is Enolase from Streptococcus thermophilus.